Consider the following 293-residue polypeptide: Acetyl-coenzyme A carboxylase carboxyl transferase subunit beta (293 aa).

One can recognise a CoA carboxyltransferase N-terminal domain in the interval 29 to 293 (LWSKCPECGL…GCRPMEITSA (265 aa)). Zn(2+) is bound by residues Cys33, Cys36, Cys52, and Cys55. The segment at 33-55 (CPECGLVVYVKDLKGNASVCAGC) adopts a C4-type zinc-finger fold.

The protein belongs to the AccD/PCCB family. In terms of assembly, acetyl-CoA carboxylase is a heterohexamer composed of biotin carboxyl carrier protein (AccB), biotin carboxylase (AccC) and two subunits each of ACCase subunit alpha (AccA) and ACCase subunit beta (AccD). Zn(2+) is required as a cofactor.

It is found in the cytoplasm. The catalysed reaction is N(6)-carboxybiotinyl-L-lysyl-[protein] + acetyl-CoA = N(6)-biotinyl-L-lysyl-[protein] + malonyl-CoA. The protein operates within lipid metabolism; malonyl-CoA biosynthesis; malonyl-CoA from acetyl-CoA: step 1/1. Component of the acetyl coenzyme A carboxylase (ACC) complex. Biotin carboxylase (BC) catalyzes the carboxylation of biotin on its carrier protein (BCCP) and then the CO(2) group is transferred by the transcarboxylase to acetyl-CoA to form malonyl-CoA. This chain is Acetyl-coenzyme A carboxylase carboxyl transferase subunit beta, found in Parasynechococcus marenigrum (strain WH8102).